The sequence spans 359 residues: Ferredoxin--NADP reductase (359 aa).

Asp-48, Gln-56, Tyr-61, Ala-101, Phe-139, Asp-304, and Ser-345 together coordinate FAD.

This sequence belongs to the ferredoxin--NADP reductase type 2 family. Homodimer. Requires FAD as cofactor.

The catalysed reaction is 2 reduced [2Fe-2S]-[ferredoxin] + NADP(+) + H(+) = 2 oxidized [2Fe-2S]-[ferredoxin] + NADPH. This is Ferredoxin--NADP reductase from Ralstonia pickettii (strain 12J).